The sequence spans 419 residues: Ribosome biogenesis protein WDR12 homolog (419 aa).

The ubiquitin-like (UBL) domain stretch occupies residues 10–91 (VQVHLKTKQE…EDSIEIEYVE (82 aa)). WD repeat units lie at residues 103–140 (LHDDWVSAVKASGKWILTGCYDNTLNIWTYKGKHKLTI), 142–184 (GHTA…NAVE), 191–230 (GHERGVDSVCVSPDAQRFATGSWDTMLKIWSAELEDAGES), 249–287 (GHRESISAVQWMDNNTLLTGSWDHTLKVWDLNLEGIKTE), 289–328 (STNKSIFDASHSKLNNLIVTASADKNLRLYDARTNQGSVV), 334–374 (GHNA…APLY), and 378–416 (GHGEKVLDIDWSNPKYIVSGGADNTVRVFKSSKATVENM).

Belongs to the WD repeat WDR12/YTM1 family.

It localises to the nucleus. The protein localises to the nucleolus. Its subcellular location is the nucleoplasm. Functionally, required for maturation of ribosomal RNAs and formation of the large ribosomal subunit. The polypeptide is Ribosome biogenesis protein WDR12 homolog (Drosophila mojavensis (Fruit fly)).